The sequence spans 145 residues: Deoxyuridine 5'-triphosphate nucleotidohydrolase (145 aa).

Belongs to the dUTPase family. It depends on Mg(2+) as a cofactor.

It catalyses the reaction dUTP + H2O = dUMP + diphosphate + H(+). Its function is as follows. This enzyme is involved in nucleotide metabolism: it produces dUMP, the immediate precursor of thymidine nucleotides and it decreases the intracellular concentration of dUTP so that uracil cannot be incorporated into DNA. In Fowlpox virus (strain NVSL) (FPV), this protein is Deoxyuridine 5'-triphosphate nucleotidohydrolase (DUT).